Here is a 546-residue protein sequence, read N- to C-terminus: Chaperonin GroEL (546 aa).

ATP is bound by residues 29-32 (TMGP), K50, 86-90 (DGTTT), G414, and D492.

Belongs to the chaperonin (HSP60) family. In terms of assembly, forms a cylinder of 14 subunits composed of two heptameric rings stacked back-to-back. Interacts with the co-chaperonin GroES.

It localises to the cytoplasm. The enzyme catalyses ATP + H2O + a folded polypeptide = ADP + phosphate + an unfolded polypeptide.. In terms of biological role, together with its co-chaperonin GroES, plays an essential role in assisting protein folding. The GroEL-GroES system forms a nano-cage that allows encapsulation of the non-native substrate proteins and provides a physical environment optimized to promote and accelerate protein folding. The sequence is that of Chaperonin GroEL from Helicobacter pylori (strain HPAG1).